The sequence spans 125 residues: Small ribosomal subunit protein uS12m (125 aa).

Positions Met-1–Leu-26 are disordered. Positions Leu-8–Lys-23 are enriched in basic residues.

This sequence belongs to the universal ribosomal protein uS12 family.

Its subcellular location is the mitochondrion. The sequence is that of Small ribosomal subunit protein uS12m (RPS12) from Prototheca wickerhamii.